The following is a 440-amino-acid chain: IAA-amino acid hydrolase ILR1-like 4 (440 aa).

Positions 1 to 23 are cleaved as a signal peptide; it reads MSFFKWVSFVLILHLLNPTLISC. Residues cysteine 134, histidine 136, glutamate 170, histidine 194, and histidine 397 each contribute to the Mn(2+) site. Positions 437 to 440 match the Prevents secretion from ER motif; the sequence is KDEL.

Belongs to the peptidase M20 family. Mn(2+) serves as cofactor. In terms of tissue distribution, expressed in leaves, stems, roots, siliques and flowers. Detected in the vascular tissue of cotyledons and roots, in adult leaves, stems, siliques, petals, hydathodes and in silique abscission zones and funicles.

It is found in the endoplasmic reticulum lumen. It catalyses the reaction a jasmonyl-L-amino acid + H2O = a jasmonate + an L-alpha-amino acid. Functionally, hydrolyzes certain amino acid conjugates of the plant growth regulator indole-3-acetic acid (IAA), including IAA-Ala, IAA-Asn, IAA-Cys, IAA-Glu, IAA-Met, IAA-Ser and IAA-Gly. Has a lower efficiency with IAA-Phe, IAA-Leu and IAA-Val and no activity with IAA-Ile. Important for IAA-Leu hydrolysis in roots. Also hydrolyzes amino acid conjugates of jasmonic acid and 12-hydroxy jasmonic acid. This Arabidopsis thaliana (Mouse-ear cress) protein is IAA-amino acid hydrolase ILR1-like 4.